Here is a 128-residue protein sequence, read N- to C-terminus: Con-Ins F2 (128 aa).

A signal peptide spans 1 to 24; sequence MTTSSYFLLVALGLLLYVCRSSFG. Intrachain disulfides connect Cys-29-Cys-104, Cys-41-Cys-107, Cys-53-Cys-120, and Cys-106-Cys-111. A propeptide spans 59–89 (c peptide); the sequence is LQGGTGKKRGRASLLRKRRAFLSMLKARAKR. Glu-115 is subject to 4-carboxyglutamate; partial. Ser-127 bears the Serine amide mark.

The protein belongs to the insulin family. In terms of assembly, heterodimer of A and B chains; disulfide-linked. In terms of tissue distribution, expressed by the venom gland.

The protein resides in the secreted. Functionally, this venom insulin facilitates prey capture by rapidly inducing hypoglycemic shock. Intraperitoneal injection of this peptide into zebrafish lowers blood glucose with the same potency than human insulin. In vivo, when applied to water, this peptide reduces overall locomotor activity of zebrafish larvae, observed as a significant decrease in the percentage of time spent swimming and movement frequency. The protein is Con-Ins F2 of Conus floridulus (Cone snail).